Here is a 199-residue protein sequence, read N- to C-terminus: Thymidylate kinase (199 aa).

7–14 (GTEGVGKT) contacts ATP.

This sequence belongs to the thymidylate kinase family.

The catalysed reaction is dTMP + ATP = dTDP + ADP. In terms of biological role, phosphorylation of dTMP to form dTDP in both de novo and salvage pathways of dTTP synthesis. This Acinetobacter baumannii (strain ACICU) protein is Thymidylate kinase.